The chain runs to 278 residues: Elongation factor Ts (278 aa).

Residues 79 to 82 (TDFV) are involved in Mg(2+) ion dislocation from EF-Tu.

This sequence belongs to the EF-Ts family.

It localises to the cytoplasm. Its function is as follows. Associates with the EF-Tu.GDP complex and induces the exchange of GDP to GTP. It remains bound to the aminoacyl-tRNA.EF-Tu.GTP complex up to the GTP hydrolysis stage on the ribosome. The polypeptide is Elongation factor Ts (Borrelia recurrentis (strain A1)).